A 437-amino-acid chain; its full sequence is Amino-acid acetyltransferase (437 aa).

In terms of domain architecture, N-acetyltransferase spans 289–429 (ENIRLATSFD…EHYNYQRMSK (141 aa)).

Belongs to the acetyltransferase family. ArgA subfamily.

The protein localises to the cytoplasm. The enzyme catalyses L-glutamate + acetyl-CoA = N-acetyl-L-glutamate + CoA + H(+). Its pathway is amino-acid biosynthesis; L-arginine biosynthesis; N(2)-acetyl-L-ornithine from L-glutamate: step 1/4. This is Amino-acid acetyltransferase from Actinobacillus pleuropneumoniae serotype 7 (strain AP76).